The primary structure comprises 161 residues: 3-hydroxyacyl-[acyl-carrier-protein] dehydratase FabZ (161 aa).

Residue H66 is part of the active site.

It belongs to the thioester dehydratase family. FabZ subfamily.

It is found in the cytoplasm. The enzyme catalyses a (3R)-hydroxyacyl-[ACP] = a (2E)-enoyl-[ACP] + H2O. Functionally, involved in unsaturated fatty acids biosynthesis. Catalyzes the dehydration of short chain beta-hydroxyacyl-ACPs and long chain saturated and unsaturated beta-hydroxyacyl-ACPs. This Gluconacetobacter diazotrophicus (strain ATCC 49037 / DSM 5601 / CCUG 37298 / CIP 103539 / LMG 7603 / PAl5) protein is 3-hydroxyacyl-[acyl-carrier-protein] dehydratase FabZ.